A 506-amino-acid polypeptide reads, in one-letter code: Maturase K (506 aa).

Belongs to the intron maturase 2 family. MatK subfamily.

The protein localises to the plastid. It is found in the chloroplast. Its function is as follows. Usually encoded in the trnK tRNA gene intron. Probably assists in splicing its own and other chloroplast group II introns. The sequence is that of Maturase K from Melilotus albus (White sweet clover).